Reading from the N-terminus, the 655-residue chain is Kelch-like protein 13 (655 aa).

In terms of domain architecture, BTB spans 92-161 (CDVTLMPGDT…IYTAKLSLNM (70 aa)). Positions 196–297 (CVEVGRIANT…TPQELINYVQ (102 aa)) constitute a BACK domain. Kelch repeat units follow at residues 341–389 (HLVT…VIGN), 390–441 (FLYV…ALKG), 442–488 (YLYA…VYGG), 490–535 (MYIS…TVGE), 537–587 (LYVI…VFEN), and 588–636 (KIYV…TLTV).

In terms of assembly, component of the BCR(KLHL9-KLHL13) E3 ubiquitin ligase complex, at least composed of CUL3, KLHL9, KLHL13 and RBX1. Interacts with AURKB.

The protein operates within protein modification; protein ubiquitination. Substrate-specific adapter of a BCR (BTB-CUL3-RBX1) E3 ubiquitin-protein ligase complex required for mitotic progression and cytokinesis. The BCR(KLHL9-KLHL13) E3 ubiquitin ligase complex mediates the ubiquitination of AURKB and controls the dynamic behavior of AURKB on mitotic chromosomes and thereby coordinates faithful mitotic progression and completion of cytokinesis. This chain is Kelch-like protein 13 (KLHL13), found in Bos taurus (Bovine).